Consider the following 93-residue polypeptide: Small ribosomal subunit protein uS19 (93 aa).

Belongs to the universal ribosomal protein uS19 family.

Protein S19 forms a complex with S13 that binds strongly to the 16S ribosomal RNA. The polypeptide is Small ribosomal subunit protein uS19 (Geotalea uraniireducens (strain Rf4) (Geobacter uraniireducens)).